The primary structure comprises 146 residues: Universal stress protein MT1672 (146 aa).

Belongs to the universal stress protein A family.

This chain is Universal stress protein MT1672, found in Mycobacterium tuberculosis (strain CDC 1551 / Oshkosh).